The primary structure comprises 253 residues: DNA repair protein RecO (253 aa).

Belongs to the RecO family.

Functionally, involved in DNA repair and RecF pathway recombination. This chain is DNA repair protein RecO, found in Dehalococcoides mccartyi (strain ATCC BAA-2266 / KCTC 15142 / 195) (Dehalococcoides ethenogenes (strain 195)).